We begin with the raw amino-acid sequence, 167 residues long: Phospholipase A2 heteromtoxin (167 aa).

Trp-38, Gly-40, and Gly-42 together coordinate Ca(2+). Intrachain disulfides connect Cys-39-Cys-61, Cys-60-Cys-99, Cys-67-Cys-92, Cys-90-Cys-127, and Cys-132-Cys-144. The active site involves His-64. Residue Asp-65 participates in Ca(2+) binding. The propeptide occupies Gly-136 to Arg-140.

The protein belongs to the phospholipase A2 family. Group III subfamily. Heterodimer composed of a large and a small subunits; disulfide-linked. It depends on Ca(2+) as a cofactor. As to expression, expressed by the venom gland.

Its subcellular location is the secreted. The catalysed reaction is a 1,2-diacyl-sn-glycero-3-phosphocholine + H2O = a 1-acyl-sn-glycero-3-phosphocholine + a fatty acid + H(+). Functionally, phospholipase toxin, which catalyzes the calcium-dependent hydrolysis of the 2-acyl groups in 3-sn-phosphoglycerides. Inhibits both skeletal (RYR1) and cardiac (RYR2) ryanodine receptors (calcium release channels). Probably blocks ryanodine receptors by generating a lipid product. The sequence is that of Phospholipase A2 heteromtoxin from Heterometrus laoticus (Thai giant scorpion).